Reading from the N-terminus, the 166-residue chain is Lipoprotein signal peptidase (166 aa).

A run of 3 helical transmembrane segments spans residues 12 to 32 (WLWLVVVVLIIDLGSKYLILQ), 70 to 90 (WFFAGIAIGICVILLVMMYRS), and 102 to 122 (ALIIGGALGNLFDRLWHGFVV). Catalysis depends on residues Asp-123 and Asp-141. A helical transmembrane segment spans residues 137–157 (FNLADSAICIGAALIVLEGFL).

It belongs to the peptidase A8 family.

It localises to the cell inner membrane. The enzyme catalyses Release of signal peptides from bacterial membrane prolipoproteins. Hydrolyzes -Xaa-Yaa-Zaa-|-(S,diacylglyceryl)Cys-, in which Xaa is hydrophobic (preferably Leu), and Yaa (Ala or Ser) and Zaa (Gly or Ala) have small, neutral side chains.. Its pathway is protein modification; lipoprotein biosynthesis (signal peptide cleavage). In terms of biological role, this protein specifically catalyzes the removal of signal peptides from prolipoproteins. In Salmonella choleraesuis (strain SC-B67), this protein is Lipoprotein signal peptidase.